A 77-amino-acid chain; its full sequence is TSC22 domain family protein 3 (77 aa).

Met1 carries the post-translational modification N-acetylmethionine. A leucine-zipper region spans residues 19-40 (LKEQIRELVEKNSQLERENTLL). The interval 41 to 77 (KTLASPEQLEKFQSRLSPEEPAPETPEAPEAPGGSAV) is disordered. Ser45 bears the Phosphoserine mark. The segment covering 68–77 (APEAPGGSAV) has biased composition (low complexity).

The protein belongs to the TSC-22/Dip/Bun family. Can form homodimers, however it is likely to function as a monomer. Interacts with AP1 and NFKB1. Interacts with MYOD1. Interacts with HDAC1; this interaction affects HDAC1 activity on MYOG promoter and thus inhibits MYOD1 transcriptional activity.

It is found in the cytoplasm. Its subcellular location is the nucleus. Its function is as follows. Protects T-cells from IL2 deprivation-induced apoptosis through the inhibition of FOXO3A transcriptional activity that leads to the down-regulation of the pro-apoptotic factor BCL2L11. In macrophages, plays a role in the anti-inflammatory and immunosuppressive effects of glucocorticoids and IL10. In T-cells, inhibits anti-CD3-induced NFKB1 nuclear translocation. In vitro, suppresses AP1 and NFKB1 DNA-binding activities. Inhibits myogenic differentiation and mediates anti-myogenic effects of glucocorticoids by binding and regulating MYOD1 and HDAC1 transcriptional activity resulting in reduced expression of MYOG. This Sus scrofa (Pig) protein is TSC22 domain family protein 3 (TSC22D3).